A 380-amino-acid polypeptide reads, in one-letter code: MMENQEFLSLDEAVLLSNKFNLNFSKEDILYLSSLDHFKAYNNIQYVYMGDVQKPVYKIHGLKGFFKTRLETKSRLLLQELDIIRTNDSYVIDKKKEQGFSRDIWTIKERNNLKSVLYLHLSNRYDDLYFIDYGFASVTLPIYEERVKKHDIVKGMVESTMLSNIAIRNKPQNAKLFVSFLSKSLTNHYVPNSSFDIFEFNIAGIIDYPFSLEPYILSYKEKEDDDLLELYNEYNFDEIFYFKHTDLLEYFQKIIDKEEKIQKSYQYQTELITELQGRIAELEKENQSLKENVKEPETSKPIRPDEKETLLKLIYALAMGRTDKDFSASAYFNKKGVLKVSTMINEIVADLEQVGIMNFSDGTLRKRLSEILQMGELKAD.

A coiled-coil region spans residues 256 to 301; the sequence is DKEEKIQKSYQYQTELITELQGRIAELEKENQSLKENVKEPETSKP.

This is an uncharacterized protein from Pasteurella multocida (strain Pm70).